The following is a 120-amino-acid chain: MAWALLLLTLLTQGTGSWAQSALTQPASVSGSPGQSITISCTGTSSDVGGYNYVSWYQQHPGKAPKLMIYEVSNRPSGVSNRFSGSKSGNTASLTISGLQAEDEADYYCSSYTSSSTLHS.

A signal peptide spans 1 to 19 (MAWALLLLTLLTQGTGSWA). Gln-20 carries the post-translational modification Pyrrolidone carboxylic acid. The segment at 20-44 (QSALTQPASVSGSPGQSITISCTGT) is framework-1. An Ig-like domain is found at 20-119 (QSALTQPASV…SSYTSSSTLH (100 aa)). An intrachain disulfide couples Cys-41 to Cys-109. Residues 45–53 (SSDVGGYNY) are complementarity-determining-1. The segment at 54–70 (VSWYQQHPGKAPKLMIY) is framework-2. Residues 71 to 73 (EVS) form a complementarity-determining-2 region. A framework-3 region spans residues 74–109 (NRPSGVSNRFSGSKSGNTASLTISGLQAEDEADYYC). Residues 110–119 (SSYTSSSTLH) form a complementarity-determining-3 region.

As to quaternary structure, immunoglobulins are composed of two identical heavy chains and two identical light chains; disulfide-linked.

The protein resides in the secreted. It localises to the cell membrane. Its function is as follows. V region of the variable domain of immunoglobulin light chains that participates in the antigen recognition. Immunoglobulins, also known as antibodies, are membrane-bound or secreted glycoproteins produced by B lymphocytes. In the recognition phase of humoral immunity, the membrane-bound immunoglobulins serve as receptors which, upon binding of a specific antigen, trigger the clonal expansion and differentiation of B lymphocytes into immunoglobulins-secreting plasma cells. Secreted immunoglobulins mediate the effector phase of humoral immunity, which results in the elimination of bound antigens. The antigen binding site is formed by the variable domain of one heavy chain, together with that of its associated light chain. Thus, each immunoglobulin has two antigen binding sites with remarkable affinity for a particular antigen. The variable domains are assembled by a process called V-(D)-J rearrangement and can then be subjected to somatic hypermutations which, after exposure to antigen and selection, allow affinity maturation for a particular antigen. This Homo sapiens (Human) protein is Immunoglobulin lambda variable 2-14.